We begin with the raw amino-acid sequence, 34 residues long: Photosystem II reaction center protein T (34 aa).

A helical membrane pass occupies residues 3-23 (SVAYILIFTLTIGTLFFAVAF).

This sequence belongs to the PsbT family. PSII is composed of 1 copy each of membrane proteins PsbA, PsbB, PsbC, PsbD, PsbE, PsbF, PsbH, PsbI, PsbJ, PsbK, PsbL, PsbM, PsbT, PsbX, PsbY, PsbZ, Psb30/Ycf12, peripheral proteins PsbO, CyanoQ (PsbQ), PsbU, PsbV and a large number of cofactors. It forms dimeric complexes.

It is found in the cellular thylakoid membrane. Functionally, found at the monomer-monomer interface of the photosystem II (PS II) dimer, plays a role in assembly and dimerization of PSII. PSII is a light-driven water plastoquinone oxidoreductase, using light energy to abstract electrons from H(2)O, generating a proton gradient subsequently used for ATP formation. This chain is Photosystem II reaction center protein T, found in Mastigocladus laminosus (Fischerella sp.).